The chain runs to 234 residues: Small ribosomal subunit protein uS3 (234 aa).

Positions 39-107 constitute a KH type-2 domain; sequence IRKFLKKELY…EVSINIKEVK (69 aa).

It belongs to the universal ribosomal protein uS3 family. As to quaternary structure, part of the 30S ribosomal subunit. Forms a tight complex with proteins S10 and S14.

Its function is as follows. Binds the lower part of the 30S subunit head. Binds mRNA in the 70S ribosome, positioning it for translation. The chain is Small ribosomal subunit protein uS3 from Helicobacter acinonychis (strain Sheeba).